The sequence spans 407 residues: FK506-binding protein 3 (407 aa).

Disordered regions lie at residues 46-136 (RIEG…DDEG), 191-223 (DEDE…EDEV), and 236-297 (QDDE…PKLV). Composition is skewed to acidic residues over residues 65–88 (NFDD…EVSA) and 103–136 (DGLD…DDEG). The span at 236 to 252 (QDDEDDEDDEDEEEEPV) shows a compositional bias: acidic residues. A compositionally biased stretch (basic and acidic residues) spans 253–272 (VEPKKILKRAAEEKKQEKAA). In terms of domain architecture, PPIase FKBP-type spans 321–407 (GSKVGVRYVG…TFDVKVVNIK (87 aa)).

The protein belongs to the FKBP-type PPIase family. FKBP3/4 subfamily.

The protein resides in the nucleus. It is found in the nucleolus. It carries out the reaction [protein]-peptidylproline (omega=180) = [protein]-peptidylproline (omega=0). Its activity is regulated as follows. Inhibited by both FK506 and rapamycin. Its function is as follows. PPIases accelerate the folding of proteins. It catalyzes the cis-trans isomerization of proline imidic peptide bonds in oligopeptides. The protein is FK506-binding protein 3 (FPR3) of Yarrowia lipolytica (strain CLIB 122 / E 150) (Yeast).